We begin with the raw amino-acid sequence, 257 residues long: Aquaporin TIP4-2 (257 aa).

The next 2 helical transmembrane spans lie at 32-52 (LVLTFLFVFTGVSASMAAGAG) and 63-83 (TLAAVAIAHALAAGVLVTAGF). Residues 91–93 (NPA) carry the NPA 1 motif. 3 helical membrane passes run 107–127 (LRALLYVAAQLLASSLACILL), 150–170 (GLVMEVILTFSLLFVTYAMIL), and 178–198 (TIGPLLTGLIVGANSLAGGNF). The short motif at 204–206 (NPA) is the NPA 2 element. The chain crosses the membrane as a helical span at residues 225 to 245 (WIGPLLGGSLAGFVYESLFMV).

This sequence belongs to the MIP/aquaporin (TC 1.A.8) family. TIP (TC 1.A.8.10) subfamily.

The protein localises to the vacuole membrane. In terms of biological role, aquaporins facilitate the transport of water and small neutral solutes across cell membranes. The protein is Aquaporin TIP4-2 (TIP4-2) of Zea mays (Maize).